The chain runs to 396 residues: 1-deoxy-D-xylulose 5-phosphate reductoisomerase (396 aa).

NADPH-binding residues include Thr10, Gly11, Ser12, Ile13, Asn38, and Asn123. Residue Lys124 coordinates 1-deoxy-D-xylulose 5-phosphate. Glu125 is an NADPH binding site. Asp149 provides a ligand contact to Mn(2+). The 1-deoxy-D-xylulose 5-phosphate site is built by Ser150, Glu151, Ser185, and His208. Position 151 (Glu151) interacts with Mn(2+). Gly214 is a binding site for NADPH. Residues Ser221, Asn226, Lys227, and Glu230 each contribute to the 1-deoxy-D-xylulose 5-phosphate site. Glu230 serves as a coordination point for Mn(2+).

This sequence belongs to the DXR family. Mg(2+) is required as a cofactor. Mn(2+) serves as cofactor.

It catalyses the reaction 2-C-methyl-D-erythritol 4-phosphate + NADP(+) = 1-deoxy-D-xylulose 5-phosphate + NADPH + H(+). It participates in isoprenoid biosynthesis; isopentenyl diphosphate biosynthesis via DXP pathway; isopentenyl diphosphate from 1-deoxy-D-xylulose 5-phosphate: step 1/6. Its function is as follows. Catalyzes the NADPH-dependent rearrangement and reduction of 1-deoxy-D-xylulose-5-phosphate (DXP) to 2-C-methyl-D-erythritol 4-phosphate (MEP). This Shewanella pealeana (strain ATCC 700345 / ANG-SQ1) protein is 1-deoxy-D-xylulose 5-phosphate reductoisomerase.